Consider the following 504-residue polypeptide: Protein anon-37Cs (504 aa).

As to expression, low levels seen in adult heads, thorax, abdomen and ovaries, high levels in testes.

Its subcellular location is the cytoplasm. Has a non-vital function. The polypeptide is Protein anon-37Cs (anon-37Cs) (Drosophila melanogaster (Fruit fly)).